Reading from the N-terminus, the 380-residue chain is Cytochrome b (380 aa).

A run of 4 helical transmembrane segments spans residues 33-53, 77-98, 113-133, and 178-198; these read FGSLLGACLILQITTGLFLAM, WIIRYLHANGASMLFICLFLHV, WNIGIILLLTTMATAFMGYVL, and FFTLHFILPFIITALTTLHLL. Heme b contacts are provided by H83 and H97. Heme b is bound by residues H182 and H196. H201 lines the a ubiquinone pocket. 4 consecutive transmembrane segments (helical) span residues 226–246, 288–308, 320–340, and 347–367; these read TKDILGLFLFLLALMVLTLFS, LGGVLALLLSILILAVIPILH, LSQLLYWLLATDLLILTWIGG, and FITIGQVASVLYFTTILILMP.

It belongs to the cytochrome b family. The cytochrome bc1 complex contains 11 subunits: 3 respiratory subunits (MT-CYB, CYC1 and UQCRFS1), 2 core proteins (UQCRC1 and UQCRC2) and 6 low-molecular weight proteins (UQCRH/QCR6, UQCRB/QCR7, UQCRQ/QCR8, UQCR10/QCR9, UQCR11/QCR10 and a cleavage product of UQCRFS1). This cytochrome bc1 complex then forms a dimer. It depends on heme b as a cofactor.

The protein resides in the mitochondrion inner membrane. Functionally, component of the ubiquinol-cytochrome c reductase complex (complex III or cytochrome b-c1 complex) that is part of the mitochondrial respiratory chain. The b-c1 complex mediates electron transfer from ubiquinol to cytochrome c. Contributes to the generation of a proton gradient across the mitochondrial membrane that is then used for ATP synthesis. This Pan paniscus (Pygmy chimpanzee) protein is Cytochrome b (MT-CYB).